The sequence spans 210 residues: Peroxynitrite isomerase (210 aa).

The GXWXGXG motif lies at 21–27; it reads GQWEGQG. His-190 contacts heme b.

Belongs to the nitrobindin family. Homodimer. It depends on heme b as a cofactor.

It carries out the reaction peroxynitrite = nitrate. The protein operates within nitrogen metabolism. Heme-binding protein able to scavenge peroxynitrite and to protect free L-tyrosine against peroxynitrite-mediated nitration, by acting as a peroxynitrite isomerase that converts peroxynitrite to nitrate. Therefore, this protein likely plays a role in peroxynitrite sensing and in the detoxification of reactive nitrogen and oxygen species (RNS and ROS, respectively). Is able to bind nitric oxide (NO) in vitro, but may act as a sensor of peroxynitrite levels in vivo. This is Peroxynitrite isomerase from Renibacterium salmoninarum (strain ATCC 33209 / DSM 20767 / JCM 11484 / NBRC 15589 / NCIMB 2235).